We begin with the raw amino-acid sequence, 164 residues long: Peptidyl-prolyl cis-trans isomerase CYP18-2 (164 aa).

Positions 12–162 constitute a PPIase cyclophilin-type domain; it reads VTLETSMGPF…HEVKILRTKV (151 aa).

This sequence belongs to the cyclophilin-type PPIase family. In terms of tissue distribution, ubiquitous.

The protein localises to the cytoplasm. The catalysed reaction is [protein]-peptidylproline (omega=180) = [protein]-peptidylproline (omega=0). Functionally, PPIases accelerate the folding of proteins. It catalyzes the cis-trans isomerization of proline imidic peptide bonds in oligopeptides. The sequence is that of Peptidyl-prolyl cis-trans isomerase CYP18-2 (CYP18-2) from Arabidopsis thaliana (Mouse-ear cress).